We begin with the raw amino-acid sequence, 369 residues long: Quinolinate synthase (369 aa).

Residues histidine 47 and serine 64 each contribute to the iminosuccinate site. Cysteine 111 lines the [4Fe-4S] cluster pocket. Residues tyrosine 142–asparagine 144 and serine 163 contribute to the iminosuccinate site. Cysteine 231 contributes to the [4Fe-4S] cluster binding site. Residues histidine 257–glutamate 259 and threonine 274 each bind iminosuccinate. Cysteine 321 lines the [4Fe-4S] cluster pocket.

This sequence belongs to the quinolinate synthase family. Type 3 subfamily. The cofactor is [4Fe-4S] cluster.

Its subcellular location is the cytoplasm. The catalysed reaction is iminosuccinate + dihydroxyacetone phosphate = quinolinate + phosphate + 2 H2O + H(+). It participates in cofactor biosynthesis; NAD(+) biosynthesis; quinolinate from iminoaspartate: step 1/1. In terms of biological role, catalyzes the condensation of iminoaspartate with dihydroxyacetone phosphate to form quinolinate. The sequence is that of Quinolinate synthase from Bacillus pumilus (strain SAFR-032).